The chain runs to 327 residues: Phospho-N-acetylmuramoyl-pentapeptide-transferase (327 aa).

A run of 10 helical transmembrane segments spans residues isoleucine 3–isoleucine 23, threonine 51–phenylalanine 71, leucine 75–leucine 95, leucine 115–glycine 135, isoleucine 140–isoleucine 160, isoleucine 172–valine 192, phenylalanine 197–asparagine 217, isoleucine 223–serine 243, tryptophan 248–valine 268, and valine 306–tyrosine 326.

Belongs to the glycosyltransferase 4 family. MraY subfamily. Requires Mg(2+) as cofactor.

It localises to the cell membrane. It catalyses the reaction UDP-N-acetyl-alpha-D-muramoyl-L-alanyl-gamma-D-glutamyl-L-lysyl-D-alanyl-D-alanine + di-trans,octa-cis-undecaprenyl phosphate = Mur2Ac(oyl-L-Ala-gamma-D-Glu-L-Lys-D-Ala-D-Ala)-di-trans,octa-cis-undecaprenyl diphosphate + UMP. It functions in the pathway cell wall biogenesis; peptidoglycan biosynthesis. Its function is as follows. Catalyzes the initial step of the lipid cycle reactions in the biosynthesis of the cell wall peptidoglycan: transfers peptidoglycan precursor phospho-MurNAc-pentapeptide from UDP-MurNAc-pentapeptide onto the lipid carrier undecaprenyl phosphate, yielding undecaprenyl-pyrophosphoryl-MurNAc-pentapeptide, known as lipid I. The polypeptide is Phospho-N-acetylmuramoyl-pentapeptide-transferase (Streptococcus sanguinis (strain SK36)).